The primary structure comprises 191 residues: dCTP deaminase, dUMP-forming (191 aa).

DCTP contacts are provided by residues 101-106 (KSSLGR), Asp119, 127-129 (TLE), Gln148, Tyr162, and Gln174. Glu129 functions as the Proton donor/acceptor in the catalytic mechanism. The tract at residues 169–191 (NRYQGQRGPTASRSHLNFHRTRI) is disordered. Over residues 171-183 (YQGQRGPTASRSH) the composition is skewed to polar residues.

The protein belongs to the dCTP deaminase family. Homotrimer.

It carries out the reaction dCTP + 2 H2O = dUMP + NH4(+) + diphosphate. It functions in the pathway pyrimidine metabolism; dUMP biosynthesis; dUMP from dCTP: step 1/1. Its function is as follows. Bifunctional enzyme that catalyzes both the deamination of dCTP to dUTP and the hydrolysis of dUTP to dUMP without releasing the toxic dUTP intermediate. This chain is dCTP deaminase, dUMP-forming, found in Pseudarthrobacter chlorophenolicus (strain ATCC 700700 / DSM 12829 / CIP 107037 / JCM 12360 / KCTC 9906 / NCIMB 13794 / A6) (Arthrobacter chlorophenolicus).